The sequence spans 995 residues: DNA repair protein Rev1 (995 aa).

In terms of domain architecture, BRCT spans 35 to 121; the sequence is RKSDLFQGIS…KIVDYKPYLL (87 aa). Disordered regions lie at residues 135 to 164 and 182 to 211; these read GKPKDNGANESKSDVEPPKDKAEVEVDSTK and VATSPEKEASASESKITNLSTTSNNSTTAR. Residues 136–164 are compositionally biased toward basic and acidic residues; the sequence is KPKDNGANESKSDVEPPKDKAEVEVDSTK. Positions 192–211 are enriched in low complexity; that stretch reads ASESKITNLSTTSNNSTTAR. The UmuC domain maps to 275–505; sequence VMHIDMDCFF…MSLDLLPGVG (231 aa). Asp-279 lines the Mg(2+) pocket. Residues 361-367, Asn-373, and Asp-421 each bind dCTP; that span reads SCSYEAR. A Mg(2+)-binding site is contributed by Asp-421. Residue Glu-422 is part of the active site. Residues 696 to 868 form an interaction with PolI region; sequence SEMRKDKPIP…HYIRSDQIVA (173 aa). The interaction with PolH/DNApol-eta stretch occupies residues 878 to 995; the sequence is VNPHILKLIS…IEYIRCIKCS (118 aa).

It belongs to the DNA polymerase type-Y family. In terms of assembly, interacts (via C-terminus) with PolH/DNApol-eta (via C-terminal regions). Interacts (via C-terminus) with PolI. It depends on Mg(2+) as a cofactor.

It is found in the nucleus. Functionally, deoxycytidyl transferase involved in DNA repair. Transfers a dCMP residue from dCTP to the 3'-end of a DNA primer in a template-dependent reaction. May assist in the first step in the bypass of abasic lesions by the insertion of a nucleotide opposite the lesion. Required for normal induction of mutations by physical and chemical agents. During homologous recombination (HR) repair of DNA double-strand breaks (DSBs) regulates the extent of repair synthesis. Possibly recruits the DNA polymerase zeta complex or another translesion polymerase to early DSB repair intermediates to initiate repair synthesis, while also blocking the access of more processive polymerases preventing them from acting during the initial stages of HR repair. The chain is DNA repair protein Rev1 from Drosophila melanogaster (Fruit fly).